Here is a 224-residue protein sequence, read N- to C-terminus: UPF0758 protein VS_0182 (224 aa).

Residues 1–21 (MPISKMPVESMPREKLLSRGP) form a disordered region. The 123-residue stretch at 102 to 224 (ALTSPSHTKL…VISFAERGWI (123 aa)) folds into the MPN domain. Zn(2+) is bound by residues His-173, His-175, and Asp-186. The short motif at 173–186 (HNHPSGVAEPSQAD) is the JAMM motif element.

The protein belongs to the UPF0758 family.

This Vibrio atlanticus (strain LGP32) (Vibrio splendidus (strain Mel32)) protein is UPF0758 protein VS_0182.